The sequence spans 400 residues: WW domain-containing transcription regulator protein 1 (400 aa).

K46 participates in a covalent cross-link: Glycyl lysine isopeptide (Lys-Gly) (interchain with G-Cter in ubiquitin). The tract at residues 52–117 (FFKEPDSGSH…QQHAHLRQQS (66 aa)) is disordered. Polar residues predominate over residues 61-70 (HSRQSSTDSS). S62 is modified (phosphoserine). At S89 the chain carries Phosphoserine; by LATS2. Residue S105 is modified to Phosphoserine. One can recognise a WW domain in the interval 124-157 (LPLPPGWEMTFTATGQRYFLNHIEKITTWQDPRK). The tract at residues 222–400 (PNALTTQQQQ…NKSEPFLTWL (179 aa)) is required for interaction with PALS1. Residues 225–259 (LTTQQQQQQKLRLQRIQMERERIRMRQEELMRQEA) are a coiled coil. Phosphoserine is present on S295. A Phosphoserine; by LATS2 modification is found at S311. The short motif at 394-400 (EPFLTWL) is the PDZ-binding element.

Binds to SLC9A3R2 via the PDZ motif at the plasma membrane. Binds to YWHAZ in vivo and in vitro through the phosphoserine-binding motif RSHSSP. Interacts (via coiled-coil domain) with SMAD2 (via MH1 domain), SMAD3 and SMAD4. Interacts with MED15. Interacts with PAX8 and NKX2-1. Interacts with TEAD1, TEAD2, TEAD3 and TEAD4. Interacts (via WW domain) with PALS1. Interacts with LATS1. Interacts with YAP1 (when phosphorylated at 'Ser-127'). Interacts (via WW domain) with PRRG4 (via cytoplasmic domain). Interacts (via WW domain) with AMOTL2 (via PPXY motif); the interaction promotes WWTR1/TAZ localization to the cytoplasm and tight junctions, thereby inhibiting its transcriptional coactivator properties. Interacts (via WW domain) with AMOT isoform 1; the interaction facilitates translocation of WWTR1/TAZ to the cytoplasm. In terms of processing, phosphorylated by LATS2 and STK3/MST2. Phosphorylation by LATS2 results in creation of 14-3-3 binding sites, retention in the cytoplasm, and functional inactivation. Phosphorylation results in the inhibition of transcriptional coactivation through YWHAZ-mediated nuclear export. Phosphorylated in the nucleus by PRP4K; phosphorylation leads to nuclear exclusion. Post-translationally, ubiquitinated at Lys-46; leading to proteasomal degradation. Deubiquitinated and stabilized by UCHL1 at Lys-46; leading to inhibition of osteoclastogenesis. As to expression, highly expressed in kidney, heart, placenta and lung. Expressed in the thyroid tissue.

It is found in the nucleus. It localises to the cytoplasm. Its subcellular location is the cell membrane. The protein localises to the cell junction. The protein resides in the tight junction. Transcriptional coactivator which acts as a downstream regulatory target in the Hippo signaling pathway that plays a pivotal role in organ size control and tumor suppression by restricting proliferation and promoting apoptosis. The core of this pathway is composed of a kinase cascade wherein STK3/MST2 and STK4/MST1, in complex with its regulatory protein SAV1, phosphorylates and activates LATS1/2 in complex with its regulatory protein MOB1, which in turn phosphorylates and inactivates YAP1 oncoprotein and WWTR1/TAZ. WWTR1 enhances PAX8 and NKX2-1/TTF1-dependent gene activation. In conjunction with YAP1, involved in the regulation of TGFB1-dependent SMAD2 and SMAD3 nuclear accumulation. Plays a key role in coupling SMADs to the transcriptional machinery such as the mediator complex. Regulates embryonic stem-cell self-renewal, promotes cell proliferation and epithelial-mesenchymal transition. The sequence is that of WW domain-containing transcription regulator protein 1 from Homo sapiens (Human).